Consider the following 387-residue polypeptide: N-acetyldiaminopimelate deacetylase (387 aa).

The active site involves Asp75. Glu134 functions as the Proton acceptor in the catalytic mechanism.

It belongs to the peptidase M20A family. N-acetyldiaminopimelate deacetylase subfamily.

It carries out the reaction N-acetyl-(2S,6S)-2,6-diaminopimelate + H2O = (2S,6S)-2,6-diaminopimelate + acetate. It functions in the pathway amino-acid biosynthesis; L-lysine biosynthesis via DAP pathway; LL-2,6-diaminopimelate from (S)-tetrahydrodipicolinate (acetylase route): step 3/3. Functionally, catalyzes the conversion of N-acetyl-diaminopimelate to diaminopimelate and acetate. This is N-acetyldiaminopimelate deacetylase from Leuconostoc citreum (strain KM20).